A 226-amino-acid polypeptide reads, in one-letter code: ATP synthase F(0) complex subunit a (226 aa).

6 helical membrane-spanning segments follow: residues 6-26 (FASF…IIMF), 68-88 (WALM…LGLL), 97-117 (QLSM…ILGF), 138-158 (IPML…ALAV), 164-184 (ITAG…LMDI), and 189-209 (ATIT…VALI).

The protein belongs to the ATPase A chain family. As to quaternary structure, component of the ATP synthase complex composed at least of ATP5F1A/subunit alpha, ATP5F1B/subunit beta, ATP5MC1/subunit c (homooctomer), MT-ATP6/subunit a, MT-ATP8/subunit 8, ATP5ME/subunit e, ATP5MF/subunit f, ATP5MG/subunit g, ATP5MK/subunit k, ATP5MJ/subunit j, ATP5F1C/subunit gamma, ATP5F1D/subunit delta, ATP5F1E/subunit epsilon, ATP5PF/subunit F6, ATP5PB/subunit b, ATP5PD/subunit d, ATP5PO/subunit OSCP. ATP synthase complex consists of a soluble F(1) head domain (subunits alpha(3) and beta(3)) - the catalytic core - and a membrane F(0) domain - the membrane proton channel (subunits c, a, 8, e, f, g, k and j). These two domains are linked by a central stalk (subunits gamma, delta, and epsilon) rotating inside the F1 region and a stationary peripheral stalk (subunits F6, b, d, and OSCP). Interacts with DNAJC30; interaction is direct.

Its subcellular location is the mitochondrion inner membrane. It carries out the reaction H(+)(in) = H(+)(out). In terms of biological role, subunit a, of the mitochondrial membrane ATP synthase complex (F(1)F(0) ATP synthase or Complex V) that produces ATP from ADP in the presence of a proton gradient across the membrane which is generated by electron transport complexes of the respiratory chain. ATP synthase complex consist of a soluble F(1) head domain - the catalytic core - and a membrane F(1) domain - the membrane proton channel. These two domains are linked by a central stalk rotating inside the F(1) region and a stationary peripheral stalk. During catalysis, ATP synthesis in the catalytic domain of F(1) is coupled via a rotary mechanism of the central stalk subunits to proton translocation. With the subunit c (ATP5MC1), forms the proton-conducting channel in the F(0) domain, that contains two crucial half-channels (inlet and outlet) that facilitate proton movement from the mitochondrial intermembrane space (IMS) into the matrix. Protons are taken up via the inlet half-channel and released through the outlet half-channel, following a Grotthuss mechanism. The polypeptide is ATP synthase F(0) complex subunit a (Rattus norvegicus (Rat)).